The following is a 144-amino-acid chain: Large ribosomal subunit protein uL15 (144 aa).

Residues 1 to 52 are disordered; that stretch reads MRLNTLSPAEGAKHAPKRVGRGIGSGLGKTAGRGHKGQNSRSGGGVRRGFEG. A compositionally biased stretch (gly residues) spans 21–31; sequence RGIGSGLGKTA.

The protein belongs to the universal ribosomal protein uL15 family. In terms of assembly, part of the 50S ribosomal subunit.

In terms of biological role, binds to the 23S rRNA. This is Large ribosomal subunit protein uL15 from Yersinia enterocolitica serotype O:8 / biotype 1B (strain NCTC 13174 / 8081).